Reading from the N-terminus, the 443-residue chain is Histidinol dehydrogenase (443 aa).

Positions 133, 191, and 214 each coordinate NAD(+). Residues serine 240, glutamine 262, and histidine 265 each contribute to the substrate site. Residues glutamine 262 and histidine 265 each contribute to the Zn(2+) site. Catalysis depends on proton acceptor residues glutamate 329 and histidine 330. 4 residues coordinate substrate: histidine 330, aspartate 363, glutamate 417, and histidine 422. Aspartate 363 contacts Zn(2+). Histidine 422 provides a ligand contact to Zn(2+).

It belongs to the histidinol dehydrogenase family. Homodimer. It depends on Zn(2+) as a cofactor.

The enzyme catalyses L-histidinol + 2 NAD(+) + H2O = L-histidine + 2 NADH + 3 H(+). The protein operates within amino-acid biosynthesis; L-histidine biosynthesis; L-histidine from 5-phospho-alpha-D-ribose 1-diphosphate: step 9/9. In terms of biological role, catalyzes the sequential NAD-dependent oxidations of L-histidinol to L-histidinaldehyde and then to L-histidine. The protein is Histidinol dehydrogenase of Blochmanniella pennsylvanica (strain BPEN).